Reading from the N-terminus, the 190-residue chain is RNA pyrophosphohydrolase (190 aa).

Residues 6–149 (GYRPNVGIIL…KRDVYTQALN (144 aa)) form the Nudix hydrolase domain. Residues 38-59 (GGIKYGESPVQAMYRELHEEVG) carry the Nudix box motif. A disordered region spans residues 167 to 190 (QRVHGPRSTDSPSSETDGHAHIAG).

Belongs to the Nudix hydrolase family. RppH subfamily. A divalent metal cation is required as a cofactor.

Its function is as follows. Accelerates the degradation of transcripts by removing pyrophosphate from the 5'-end of triphosphorylated RNA, leading to a more labile monophosphorylated state that can stimulate subsequent ribonuclease cleavage. The protein is RNA pyrophosphohydrolase of Bordetella pertussis (strain Tohama I / ATCC BAA-589 / NCTC 13251).